We begin with the raw amino-acid sequence, 201 residues long: Ciliary microtubule inner protein 2C (201 aa).

The protein belongs to the CIMIP2 family. Microtubule inner protein component of sperm flagellar doublet microtubules.

It is found in the cytoplasm. The protein localises to the cytoskeleton. It localises to the cilium axoneme. Its subcellular location is the flagellum axoneme. In terms of biological role, microtubule inner protein (MIP) part of the dynein-decorated doublet microtubules (DMTs) in cilia axoneme, which is required for motile cilia beating. Binds to the intra-tubulin interfaces. The sequence is that of Ciliary microtubule inner protein 2C (CIMIP2C) from Bos taurus (Bovine).